The primary structure comprises 20 residues: MGSLESERFVVDVAASNLDK.

It belongs to the zinc-containing alcohol dehydrogenase family. The cofactor is Zn(2+).

It carries out the reaction (E)-cinnamyl alcohol + NADP(+) = (E)-cinnamaldehyde + NADPH + H(+). It catalyses the reaction (E)-coniferol + NADP(+) = (E)-coniferaldehyde + NADPH + H(+). The catalysed reaction is (E)-sinapyl alcohol + NADP(+) = (E)-sinapaldehyde + NADPH + H(+). The enzyme catalyses (E)-4-coumaroyl alcohol + NADP(+) = (E)-4-coumaraldehyde + NADPH + H(+). It carries out the reaction (E)-caffeyl alcohol + NADP(+) = (E)-caffeyl aldehyde + NADPH + H(+). It participates in aromatic compound metabolism; phenylpropanoid biosynthesis. Functionally, involved in lignin biosynthesis. Catalyzes the final step specific for the production of lignin monomers, like coniferyl alcohol, sinapyl alcohol and 4-coumaryl alcohol. This is Probable cinnamyl alcohol dehydrogenase 1 from Pseudotsuga menziesii (Douglas-fir).